Consider the following 697-residue polypeptide: MERNHWNEKSSGAKRSRERDLTLSTIRSILAADERLRIKASSYLGVGRGVDDEAVIDIFPTGQTMSFLRLLHGFLGTCRGQSMHQVLRDPCVLRKQLLYGVCKTLFDTITVRRVAEEWKLHAALFPYRALDEEDLEQYLLVWSASLRQSVQTGVLGALRDILYQYADNDDYGLYVDWCVTVGLVPLLDVKTKPSEAAERAQFVRAAVQRATETHPLAQDLLQANLALLLQVAERLGAVRVANAPEVRVFKKVRSERLEAQLRGKHIRLYVAAEPLAYERDKLLFTTPVAHLHEEILRYDGLCRHQKICQLLNTFPVKVVTASRHELNCKKLVEMMEQHDRGSDAKKSIMKFLLNVSDSKSRIGIEDSVESFLQDLTPSLVDQNRLLPARGPGGPGVVGPGGAVVGGPAGHVGLLPPPPGPAAPERDIRDLFKKQVIKCLEEQIQSQVDEIQDLRTLNQTWENRVRELRDLLTRYASRREDSMSLGARDAELYHLPVLEAVRKARDAAPFRPLAVEDNRLVANSFFSQFVPGTESLERFLTQLWENEYFRTFRLRRLVTHQGAEEAIVYSNYTVERVTLPYLCHILALGTLDPVPEAYLQLSFGEIVAAAYDDSKFCRYVELICSREKARRRQMSREAAGGVPERGTASSGGPGTLERSAPRRLITADEERRGPERVGRFRNGGPDDPRRAGGPYGFH.

Residues 633-697 (MSREAAGGVP…RRAGGPYGFH (65 aa)) are disordered. Positions 664–689 (ITADEERRGPERVGRFRNGGPDDPRR) are enriched in basic and acidic residues.

This sequence belongs to the herpesviridae portal protein family. Homododecamerizes. Interacts with terminase subunits TRM1 and TRM3.

It is found in the virion. The protein resides in the host nucleus. Forms a portal in the viral capsid through which viral DNA is translocated during DNA packaging. Assembles as a dodecamer at a single fivefold axe of the T=16 icosahedric capsid. Binds to the molecular motor that translocates the viral DNA, termed terminase. The chain is Portal protein (UL104) from Homo sapiens (Human).